Reading from the N-terminus, the 166-residue chain is Putative 4-hydroxy-4-methyl-2-oxoglutarate aldolase (166 aa).

Substrate is bound by residues 81–84 and Arg-103; that span reads GDII. Residue Asp-104 coordinates a divalent metal cation.

It belongs to the class II aldolase/RraA-like family. As to quaternary structure, homotrimer. It depends on a divalent metal cation as a cofactor.

It carries out the reaction 4-hydroxy-4-methyl-2-oxoglutarate = 2 pyruvate. The catalysed reaction is oxaloacetate + H(+) = pyruvate + CO2. Its function is as follows. Catalyzes the aldol cleavage of 4-hydroxy-4-methyl-2-oxoglutarate (HMG) into 2 molecules of pyruvate. Also contains a secondary oxaloacetate (OAA) decarboxylase activity due to the common pyruvate enolate transition state formed following C-C bond cleavage in the retro-aldol and decarboxylation reactions. The chain is Putative 4-hydroxy-4-methyl-2-oxoglutarate aldolase from Corynebacterium glutamicum (strain ATCC 13032 / DSM 20300 / JCM 1318 / BCRC 11384 / CCUG 27702 / LMG 3730 / NBRC 12168 / NCIMB 10025 / NRRL B-2784 / 534).